Here is a 217-residue protein sequence, read N- to C-terminus: MEETKSRFKRICVFCGSSSGKKPSYQEAAIQLGNELVERRIDLVYGGGSVGLMGLVSQAVHHGGRHVLGVIPKTLMPREITGETIGEVKAVADMHQRKAEMARQADAFIALPGGYGTLEELLEVITWAQLGIHRKPVGLLNVDGYYNSLLTFIDKAVDEGFISPMARRIIVSAPNAKELVRQLEEYEPEFDEITSKLVWDEVDRISYVPGSEVATAT.

Residues Glu-79, 97 to 98 (RK), 114 to 120 (GYGTLEE), and Thr-126 each bind substrate.

The protein belongs to the LOG family. As to expression, expressed in roots and shoots. Detected in the epidermis of the root elongation zone, cotyledon and leaves, in trichomes and pollen.

It is found in the cytoplasm. It localises to the nucleus. It catalyses the reaction N(6)-(dimethylallyl)adenosine 5'-phosphate + H2O = N(6)-dimethylallyladenine + D-ribose 5-phosphate. It carries out the reaction 9-ribosyl-trans-zeatin 5'-phosphate + H2O = trans-zeatin + D-ribose 5-phosphate. Cytokinin-activating enzyme working in the direct activation pathway. Phosphoribohydrolase that converts inactive cytokinin nucleotides to the biologically active free-base forms. The chain is Cytokinin riboside 5'-monophosphate phosphoribohydrolase LOG7 (LOG7) from Arabidopsis thaliana (Mouse-ear cress).